The sequence spans 205 residues: ATP-dependent Clp protease proteolytic subunit (205 aa).

Residue S107 is the Nucleophile of the active site. H132 is a catalytic residue.

This sequence belongs to the peptidase S14 family. Fourteen ClpP subunits assemble into 2 heptameric rings which stack back to back to give a disk-like structure with a central cavity, resembling the structure of eukaryotic proteasomes.

It localises to the cytoplasm. It catalyses the reaction Hydrolysis of proteins to small peptides in the presence of ATP and magnesium. alpha-casein is the usual test substrate. In the absence of ATP, only oligopeptides shorter than five residues are hydrolyzed (such as succinyl-Leu-Tyr-|-NHMec, and Leu-Tyr-Leu-|-Tyr-Trp, in which cleavage of the -Tyr-|-Leu- and -Tyr-|-Trp bonds also occurs).. In terms of biological role, cleaves peptides in various proteins in a process that requires ATP hydrolysis. Has a chymotrypsin-like activity. Plays a major role in the degradation of misfolded proteins. The sequence is that of ATP-dependent Clp protease proteolytic subunit from Pseudoalteromonas translucida (strain TAC 125).